The sequence spans 158 residues: PRA1 family protein 2 (158 aa).

A run of 4 helical transmembrane segments spans residues 36-58, 62-79, 88-108, and 113-133; these read NLNF…TLFT, LLVA…LFFV, FAVL…VIVI, and GLTL…HSAL.

Belongs to the PRA1 family.

It is found in the membrane. In terms of biological role, may act as a general Rab protein regulator. The sequence is that of PRA1 family protein 2 (prafB) from Dictyostelium discoideum (Social amoeba).